The following is a 435-amino-acid chain: Keratin, type I cytoskeletal 18 (435 aa).

The interval 2 to 84 (SYRPGSYSVS…SVSGSGLVGN (83 aa)) is head. A coil 1A region spans residues 85–120 (EKETMIGLNDRLAAYLETVRNLEQANSKLEFQIREA). The IF rod domain occupies 85–396 (EKETMIGLND…RLLDGEDFRL (312 aa)). A linker 1 region spans residues 121 to 137 (LEKKGPTTRDLSPFEKT). The tract at residues 138–229 (LEDLRKKVYD…QNHNQEVNDL (92 aa)) is coil 1B. The linker 12 stretch occupies residues 230 to 253 (RNQIAQSGVQVDVDAPKGQDLAQV). The coil 2 stretch occupies residues 254–391 (LAEVRAQYES…IATYRRLLDG (138 aa)). The segment at 392-435 (EDFRLQDALVDQSSTKSIKKVTVTQTLVDGKVVSESTNTKEIGK) is tail.

This sequence belongs to the intermediate filament family. As to quaternary structure, heterotetramer of two type I and two type II keratins. Keratin-18 associates with keratin-8. Phosphorylated. In terms of processing, proteolytically cleaved by caspases during epithelial cell apoptosis.

When phosphorylated, plays a role in filament reorganization. The sequence is that of Keratin, type I cytoskeletal 18 from Acipenser baerii (Siberian sturgeon).